The following is a 434-amino-acid chain: Serine hydroxymethyltransferase (434 aa).

(6S)-5,6,7,8-tetrahydrofolate-binding positions include Leu128 and 132–134 (GHL). Lys237 is subject to N6-(pyridoxal phosphate)lysine.

The protein belongs to the SHMT family. Homodimer. Pyridoxal 5'-phosphate serves as cofactor.

The protein resides in the cytoplasm. It carries out the reaction (6R)-5,10-methylene-5,6,7,8-tetrahydrofolate + glycine + H2O = (6S)-5,6,7,8-tetrahydrofolate + L-serine. It functions in the pathway one-carbon metabolism; tetrahydrofolate interconversion. Its pathway is amino-acid biosynthesis; glycine biosynthesis; glycine from L-serine: step 1/1. In terms of biological role, catalyzes the reversible interconversion of serine and glycine with tetrahydrofolate (THF) serving as the one-carbon carrier. This reaction serves as the major source of one-carbon groups required for the biosynthesis of purines, thymidylate, methionine, and other important biomolecules. Also exhibits THF-independent aldolase activity toward beta-hydroxyamino acids, producing glycine and aldehydes, via a retro-aldol mechanism. This is Serine hydroxymethyltransferase from Corynebacterium glutamicum (strain R).